The chain runs to 130 residues: Large ribosomal subunit protein bL17 (130 aa).

This sequence belongs to the bacterial ribosomal protein bL17 family. In terms of assembly, part of the 50S ribosomal subunit. Contacts protein L32.

In Azotobacter vinelandii (strain DJ / ATCC BAA-1303), this protein is Large ribosomal subunit protein bL17.